The chain runs to 390 residues: Substance-K receptor (390 aa).

At 1–32 (MGTRAIVSDANILSGLESNATGVTAFSMPGWQ) the chain is on the extracellular side. Asn19 carries an N-linked (GlcNAc...) asparagine glycan. Residues 33–56 (LALWATAYLALVLVAVTGNATVIW) traverse the membrane as a helical segment. The Cytoplasmic portion of the chain corresponds to 57–69 (IILAHERMRTVTN). The chain crosses the membrane as a helical span at residues 70-90 (YFIINLALADLCMAAFNATFN). Topologically, residues 91-107 (FIYASHNIWYFGRAFCY) are extracellular. Cys106 and Cys181 are joined by a disulfide. Residues 108–129 (FQNLFPITAMFVSIYSMTAIAA) traverse the membrane as a helical segment. Topologically, residues 130-149 (DRYMAIVHPFQPRLSAPSTK) are cytoplasmic. Residues 150 to 170 (AIIAGIWLVALALASPQCFYS) form a helical membrane-spanning segment. Over 171 to 196 (TITVDEGATKCVVAWPNDNGGKMLLL) the chain is Extracellular. A helical membrane pass occupies residues 197–218 (YHLVVFVLIYFLPLLVMFGAYS). The Cytoplasmic segment spans residues 219–251 (VIGLTLWKRAVPRHQAHGANLRHLQAKKKFVKA). A helical membrane pass occupies residues 252–272 (MVLVVLTFAICWLPYHLYFIL). Topologically, residues 273 to 290 (GTFQEDIYYHKFIQQVYL) are extracellular. Residues 291-310 (ALFWLAMSSTMYNPIIYCCL) form a helical membrane-spanning segment. The Cytoplasmic portion of the chain corresponds to 311-390 (NHRFRSGFRL…PAGPICKAQA (80 aa)). Residue Cys324 is the site of S-palmitoyl cysteine attachment. Residues 365 to 390 (HSEATNGQVGSPQDGEPAGPICKAQA) form a disordered region. Positions 366-375 (SEATNGQVGS) are enriched in polar residues.

The protein belongs to the G-protein coupled receptor 1 family.

It localises to the cell membrane. This is a receptor for the tachykinin neuropeptide substance K (neurokinin A). It is associated with G proteins that activate a phosphatidylinositol-calcium second messenger system. The rank order of affinity of this receptor to tachykinins is: substance K &gt; neuromedin-K &gt; substance P. This Rattus norvegicus (Rat) protein is Substance-K receptor (Tacr2).